The following is a 294-amino-acid chain: Cytidine deaminase (294 aa).

CMP/dCMP-type deaminase domains are found at residues 48–168 (DEDA…FGPK) and 186–294 (LTGD…VLLA). Residue 89 to 91 (NME) coordinates substrate. H102 is a Zn(2+) binding site. The active-site Proton donor is the E104. Residues C129 and C132 each coordinate Zn(2+).

Belongs to the cytidine and deoxycytidylate deaminase family. In terms of assembly, homodimer. It depends on Zn(2+) as a cofactor.

It carries out the reaction cytidine + H2O + H(+) = uridine + NH4(+). The enzyme catalyses 2'-deoxycytidine + H2O + H(+) = 2'-deoxyuridine + NH4(+). Its function is as follows. This enzyme scavenges exogenous and endogenous cytidine and 2'-deoxycytidine for UMP synthesis. This chain is Cytidine deaminase, found in Escherichia coli O17:K52:H18 (strain UMN026 / ExPEC).